The chain runs to 100 residues: Aspartyl/glutamyl-tRNA(Asn/Gln) amidotransferase subunit C (100 aa).

This sequence belongs to the GatC family. In terms of assembly, heterotrimer of A, B and C subunits.

It catalyses the reaction L-glutamyl-tRNA(Gln) + L-glutamine + ATP + H2O = L-glutaminyl-tRNA(Gln) + L-glutamate + ADP + phosphate + H(+). The enzyme catalyses L-aspartyl-tRNA(Asn) + L-glutamine + ATP + H2O = L-asparaginyl-tRNA(Asn) + L-glutamate + ADP + phosphate + 2 H(+). Allows the formation of correctly charged Asn-tRNA(Asn) or Gln-tRNA(Gln) through the transamidation of misacylated Asp-tRNA(Asn) or Glu-tRNA(Gln) in organisms which lack either or both of asparaginyl-tRNA or glutaminyl-tRNA synthetases. The reaction takes place in the presence of glutamine and ATP through an activated phospho-Asp-tRNA(Asn) or phospho-Glu-tRNA(Gln). The chain is Aspartyl/glutamyl-tRNA(Asn/Gln) amidotransferase subunit C from Streptococcus equi subsp. zooepidemicus (strain MGCS10565).